We begin with the raw amino-acid sequence, 623 residues long: Glutathione import ATP-binding protein GsiA (623 aa).

ABC transporter domains lie at 15 to 269 and 314 to 564; these read VENL…RALL and LRVR…RKLL. ATP is bound by residues 49–56 and 357–364; these read GESGSGKS.

Belongs to the ABC transporter superfamily. Glutathione importer (TC 3.A.1.5.11) family. In terms of assembly, the complex is composed of two ATP-binding proteins (GsiA), two transmembrane proteins (GsiC and GsiD) and a solute-binding protein (GsiB).

The protein localises to the cell inner membrane. The enzyme catalyses glutathione(out) + ATP + H2O = glutathione(in) + ADP + phosphate + H(+). Functionally, part of the ABC transporter complex GsiABCD involved in glutathione import. Responsible for energy coupling to the transport system. The protein is Glutathione import ATP-binding protein GsiA of Shigella flexneri serotype 5b (strain 8401).